Consider the following 212-residue polypeptide: ATP phosphoribosyltransferase (212 aa).

Belongs to the ATP phosphoribosyltransferase family. Short subfamily. Heteromultimer composed of HisG and HisZ subunits.

The protein resides in the cytoplasm. It carries out the reaction 1-(5-phospho-beta-D-ribosyl)-ATP + diphosphate = 5-phospho-alpha-D-ribose 1-diphosphate + ATP. The protein operates within amino-acid biosynthesis; L-histidine biosynthesis; L-histidine from 5-phospho-alpha-D-ribose 1-diphosphate: step 1/9. Catalyzes the condensation of ATP and 5-phosphoribose 1-diphosphate to form N'-(5'-phosphoribosyl)-ATP (PR-ATP). Has a crucial role in the pathway because the rate of histidine biosynthesis seems to be controlled primarily by regulation of HisG enzymatic activity. The polypeptide is ATP phosphoribosyltransferase (Prochlorococcus marinus (strain MIT 9312)).